The primary structure comprises 764 residues: MERAVQGTDGGGGSNSSSRSSSRATSAGSSPSCSLAGRGVSSRSAAAGLGGGGSRSSPGSVAASPSGGGGRRREPALEGVLSKYTNLLQGWQNRYFVLDFEAGILQYFVNEQSKHQKPRGVLSLSGAIVSLSDEAPHMLVVYSANGEMFKLRAADAKEKQFWVTQLRACAKYHMEMNSKSAPSSRSRSLTLLPHGTPNSASPCSQRHLSVGAPGVVTITHHKSPAAARRAKSQYSGQLHEVREMMNQVEGQQKNLVHAIESLPGSGPLTALDQDLLLLKATSAATLSCLGECLNLLQQSVHQAGQPSQKPGASENILGWHGSKSHSTEQLKNGTLGSLPSASANITWAILPNSAEDEQTSQPEPEPNSGSELVLSEDEKSDNEDKEETELGVMEDQRSIILHLISQLKLGMDLTKVVLPTFILEKRSLLEMYADFMAHPDLLLAITAGATPEERVICFVEYYLTAFHEGRKGALAKKPYNPIIGETFHCSWEVPKDRVKPKRTASRSPASCHEHPMADDPSKSYKLRFVAEQVSHHPPISCFYCECEEKRLCVNTHVWTKSKFMGMSVGVSMIGEGVLRLLEHGEEYVFTLPSAYARSILTIPWVELGGKVSINCAKTGYSATVIFHTKPFYGGKVHRVTAEVKHNPTNTIVCKAHGEWNGTLEFTYNNGETKVIDTTTLPVYPKKIRPLEKQGPMESRNLWREVTRYLRLGDIDAATEQKRHLEEKQRVEERKRENLRTPWKPKYFIQEGDGWVYFNPLWKAH.

Positions M1–E74 are disordered. Low complexity-rich tracts occupy residues N15–A47 and R55–P65. A phosphoserine mark is found at S29 and S30. An Omega-N-methylarginine modification is found at R38. 3 positions are modified to phosphoserine: S57, S60, and S64. One can recognise a PH domain in the interval E74–K171. At T196 the chain carries Phosphothreonine. 3 positions are modified to phosphoserine: S201, S209, and S223. Disordered stretches follow at residues G304 to L335 and A354 to G391. Over residues T359–S370 the composition is skewed to polar residues. Residues L374 to E389 show a composition bias toward acidic residues. A 1,2-diacyl-sn-glycero-3-phospho-(1D-myo-inositol 4-phosphate) is bound by residues L413–L418 and K477–N480. A 1,2-diacyl-sn-glycero-3-phospho-L-serine contacts are provided by residues L413–L418 and N480. A disordered region spans residues K501–P520. The segment covering C511–P520 has biased composition (basic and acidic residues). Residue H535 to H536 participates in a 1,2-diacyl-sn-glycero-3-phospho-(1D-myo-inositol 4-phosphate) binding. Residue S561 coordinates a 1,2-diacyl-sn-glycero-3-phospho-L-serine. The stretch at D713–T740 forms a coiled coil. Residues K721, E725, and R729 each coordinate a 1,2-diacyl-sn-glycero-3-phospho-(1D-myo-inositol 4-phosphate).

It belongs to the OSBP family. As to quaternary structure, interacts with OSBPL9. Interacts with DIAPH1.

It is found in the cytoplasm. It localises to the cytoskeleton. In terms of biological role, probable lipid transporter involved in lipid countertransport between the endoplasmic reticulum and the plasma membrane. Its ability to bind phosphatidylserine, suggests that it specifically exchanges phosphatidylserine with phosphatidylinositol 4-phosphate (PI4P), delivering phosphatidylserine to the plasma membrane in exchange for PI4P. Plays a role in negative regulation of lipid biosynthesis. Negatively regulates APOB secretion from hepatocytes. Binds cholesterol and acidic phospholipids. Also binds 25-hydroxycholesterol. Binds phosphatidylserine. This Homo sapiens (Human) protein is Oxysterol-binding protein-related protein 10 (OSBPL10).